The primary structure comprises 364 residues: ATP synthase gamma chain, chloroplastic (364 aa).

The transit peptide at 1–41 (MACSLSFSSSVSTFHLPTTTQSTQAPPNNATTLPTTNPIQC) directs the protein to the chloroplast. The disordered stretch occupies residues 17-36 (PTTTQSTQAPPNNATTLPTT). A compositionally biased stretch (low complexity) spans 25 to 36 (APPNNATTLPTT). C130 is a catalytic residue. C240 and C246 are joined by a disulfide.

This sequence belongs to the ATPase gamma chain family. F-type ATPases have 2 components, CF(1) - the catalytic core - and CF(0) - the membrane proton channel. CF(1) has five subunits: alpha(3), beta(3), gamma(1), delta(1), epsilon(1). CF(0) has four main subunits: a, b, b' and c. Post-translationally, disulfide bond; Cys-240 and Cys-246 are known to form a disulfide bridge in the dark which gives rise to an inactive enzyme. Activation can be brought about by a ferredoxin-dependent reduction of the disulfide bond in the light.

The protein localises to the plastid. Its subcellular location is the chloroplast thylakoid membrane. In terms of biological role, produces ATP from ADP in the presence of a proton gradient across the membrane. The gamma chain is believed to be important in regulating ATPase activity and the flow of protons through the CF(0) complex. The sequence is that of ATP synthase gamma chain, chloroplastic (ATPC) from Spinacia oleracea (Spinach).